Reading from the N-terminus, the 283-residue chain is MIEQIFFGQFQSPGPVMFQIGGFALRWYGFLIASAVIIGLNLCQWLGQKRGINPDLFNDLVIWLVVAAIPSARLYYVAFEWPRYAQHWLNIFAIWQGGIAIHGALIGGTIAILVFSRYHQLSFWNLLDVLTPAVILGQAIGRWGNFFNSEAFGAPTNLPWKLYIPFANRPLNLTSYAYFHPTFLYESVWNLGIFAILIALFFYGLRNPEKIKTGTITCVYLIGYSLGRVWIEGLRLDSLMLGPLRIAQVVSITLVLLGTAGIVWLYLLQKNLPDWSERKLVKN.

Helical transmembrane passes span Ile20–Leu40, Leu60–Glu80, Ile94–Val114, and Leu121–Gly141. Residue Arg142 participates in a 1,2-diacyl-sn-glycero-3-phospho-(1'-sn-glycerol) binding. A run of 3 helical transmembrane segments spans residues Phe183–Tyr203, Gly214–Leu234, and Gln248–Leu268.

Belongs to the Lgt family.

Its subcellular location is the cell inner membrane. It carries out the reaction L-cysteinyl-[prolipoprotein] + a 1,2-diacyl-sn-glycero-3-phospho-(1'-sn-glycerol) = an S-1,2-diacyl-sn-glyceryl-L-cysteinyl-[prolipoprotein] + sn-glycerol 1-phosphate + H(+). It functions in the pathway protein modification; lipoprotein biosynthesis (diacylglyceryl transfer). Its function is as follows. Catalyzes the transfer of the diacylglyceryl group from phosphatidylglycerol to the sulfhydryl group of the N-terminal cysteine of a prolipoprotein, the first step in the formation of mature lipoproteins. The protein is Phosphatidylglycerol--prolipoprotein diacylglyceryl transferase of Synechocystis sp. (strain ATCC 27184 / PCC 6803 / Kazusa).